Consider the following 237-residue polypeptide: Sugar fermentation stimulation protein homolog (237 aa).

It belongs to the SfsA family.

The polypeptide is Sugar fermentation stimulation protein homolog (Actinobacillus pleuropneumoniae serotype 3 (strain JL03)).